A 291-amino-acid chain; its full sequence is Transmembrane O-methyltransferase (291 aa).

A helical membrane pass occupies residues 31–51; the sequence is VGTMSPAIALAFLPLVVTLLV. S-adenosyl-L-methionine-binding positions include Glu137, 139 to 140, Ser145, Glu163, and Ser193; that span reads GT.

Belongs to the class I-like SAM-binding methyltransferase superfamily. Cation-dependent O-methyltransferase family. As to quaternary structure, interacts with LHFPL5, PCDH15, TMC1, TMC2 and TMIE. Interacts directly with TMC1. The interaction of TOMT with TMC1 and TMC2 is required for the transportation of TMC1/2 into the stereocilia of hair cells.

Its subcellular location is the membrane. The protein localises to the cytoplasm. It is found in the endoplasmic reticulum. It carries out the reaction a catechol + S-adenosyl-L-methionine = a guaiacol + S-adenosyl-L-homocysteine + H(+). Its function is as follows. Catalyzes the O-methylation, and thereby the inactivation, of catecholamine neurotransmitters and catechol hormones. Required for auditory function. Component of the cochlear hair cell's mechanotransduction (MET) machinery. Involved in the assembly of the asymmetric tip-link MET complex. Required for transportation of TMC1 and TMC2 proteins into the mechanically sensitive stereocilia of the hair cells. The function in MET is independent of the enzymatic activity. The polypeptide is Transmembrane O-methyltransferase (Homo sapiens (Human)).